A 234-amino-acid chain; its full sequence is Putative ankyrin repeat protein RF_0063 (234 aa).

ANK repeat units lie at residues 149 to 180 (NNNTALHYAVDKNLEKLSISLINKMSIETISI) and 184 to 213 (YNNTALHYATDNGLEVISWFLINNMTQKAL).

This Rickettsia felis (strain ATCC VR-1525 / URRWXCal2) (Rickettsia azadi) protein is Putative ankyrin repeat protein RF_0063.